The chain runs to 240 residues: Manganese transport system ATP-binding protein MntB (240 aa).

In terms of domain architecture, ABC transporter spans 1-233 (MNIQGLTIAY…KIQFAYGDAP (233 aa)). Residue 33–40 (GPNGAGKS) participates in ATP binding.

It belongs to the ABC transporter superfamily.

The protein resides in the cell membrane. Functionally, this protein is probably a component of a manganese permease, a binding protein-dependent, ATP-driven transport system. Probably responsible for energy coupling to the transport system. The chain is Manganese transport system ATP-binding protein MntB (mntB) from Listeria innocua serovar 6a (strain ATCC BAA-680 / CLIP 11262).